The primary structure comprises 804 residues: Zinc finger protein 541 (804 aa).

Disordered regions lie at residues 21–120 and 133–197; these read SKAS…NPDI and TLDL…GNPR. A C2H2-type 1 zinc finger spans residues 285-307; sequence FICKNCSQMFYTEKGLSSHMCFH. Positions 379–426 are disordered; sequence MEQEKDGEERDSKESSQQRKRKKRPPPKRLFIPPPPSTAGEPGPAGCH. The segment covering 380 to 395 has biased composition (basic and acidic residues); it reads EQEKDGEERDSKESSQ. The span at 396-405 shows a compositional bias: basic residues; sequence QRKRKKRPPP. The 93-residue stretch at 509–601 folds into the ELM2 domain; that stretch reads PHINIGSRFQ…VALETLLLRG (93 aa). The 52-residue stretch at 616–667 folds into the SANT domain; that stretch reads TGSDVWTPIEKRLFKKAFYAHKKDFYLIHKTIQTKTVAQCVEYYYIWKKMIK. Positions 680-743 are disordered; it reads VKREPEEVER…TPEPSGSVES (64 aa). A compositionally biased stretch (basic and acidic residues) spans 690–721; sequence TEEKVPCSPRERPSHHPIPELKIKTKSYRRES. The segment at 747-769 adopts a C2H2-type 2 zinc-finger fold; it reads FPCRECERVFDKIKSRNAHMKRH.

As to quaternary structure, interacts with DNTTIP1. Identified in a complex with KCDT19, HDAC1 and HSPA2s. Component of a histone deacetylase complex containing DNTTIP1, ZNF541, HDAC1 and HDAC2. Identified in a complex with HDAC1, HDAC2, DNTTIP1 and KCTD19.

The protein resides in the nucleus. Transcription regulator which is essential for male fertility and for the completion of meiotic prophase in spermatocytes. Regulates progression of the pachytene stage of meiotic prophase by activating the expression of genes involved in meiosis and post-meiosis during spermatogenesis. Maintains the repression of pre-pachytene transcriptional programs, including meiotic double-strand breaks (DSB) formation genes in pachytene spermatocytes and suppresses aberrant DSB formation after mid-pachytene, thus ensuring meiosis progression. This is Zinc finger protein 541 (ZNF541) from Macaca fascicularis (Crab-eating macaque).